The chain runs to 150 residues: Flagellar assembly factor FliW (150 aa).

This sequence belongs to the FliW family. Interacts with translational regulator CsrA and flagellin(s).

The protein resides in the cytoplasm. Its function is as follows. Acts as an anti-CsrA protein, binds CsrA and prevents it from repressing translation of its target genes, one of which is flagellin. Binds to flagellin and participates in the assembly of the flagellum. The chain is Flagellar assembly factor FliW from Thermoanaerobacter pseudethanolicus (strain ATCC 33223 / 39E) (Clostridium thermohydrosulfuricum).